The primary structure comprises 109 residues: Small ribosomal subunit protein bS6 (109 aa).

It belongs to the bacterial ribosomal protein bS6 family.

In terms of biological role, binds together with bS18 to 16S ribosomal RNA. The chain is Small ribosomal subunit protein bS6 from Dehalococcoides mccartyi (strain CBDB1).